Consider the following 187-residue polypeptide: Large ribosomal subunit protein bL25 (187 aa).

This sequence belongs to the bacterial ribosomal protein bL25 family. CTC subfamily. Part of the 50S ribosomal subunit; part of the 5S rRNA/L5/L18/L25 subcomplex. Contacts the 5S rRNA. Binds to the 5S rRNA independently of L5 and L18.

In terms of biological role, this is one of the proteins that binds to the 5S RNA in the ribosome where it forms part of the central protuberance. The chain is Large ribosomal subunit protein bL25 from Tropheryma whipplei (strain Twist) (Whipple's bacillus).